The following is a 208-amino-acid chain: dITP/XTP pyrophosphatase (208 aa).

16–21 (SNNKGK) contacts substrate. The Proton acceptor role is filled by aspartate 79. Aspartate 79 contributes to the Mg(2+) binding site. Substrate is bound by residues serine 80, 166-169 (FGYD), lysine 189, and 194-195 (HR).

This sequence belongs to the HAM1 NTPase family. Homodimer. Mg(2+) is required as a cofactor.

The enzyme catalyses XTP + H2O = XMP + diphosphate + H(+). It carries out the reaction dITP + H2O = dIMP + diphosphate + H(+). It catalyses the reaction ITP + H2O = IMP + diphosphate + H(+). Functionally, pyrophosphatase that catalyzes the hydrolysis of nucleoside triphosphates to their monophosphate derivatives, with a high preference for the non-canonical purine nucleotides XTP (xanthosine triphosphate), dITP (deoxyinosine triphosphate) and ITP. Seems to function as a house-cleaning enzyme that removes non-canonical purine nucleotides from the nucleotide pool, thus preventing their incorporation into DNA/RNA and avoiding chromosomal lesions. This Acinetobacter baumannii (strain ACICU) protein is dITP/XTP pyrophosphatase.